The following is a 272-amino-acid chain: Type III pantothenate kinase (272 aa).

An ATP-binding site is contributed by 6–13 (NVNNTNTL). 113–116 (GADR) is a binding site for substrate. Residue Asp115 is the Proton acceptor of the active site. Asp135 is a K(+) binding site. ATP is bound at residue Thr138. Thr190 contacts substrate.

The protein belongs to the type III pantothenate kinase family. As to quaternary structure, homodimer. NH4(+) serves as cofactor. K(+) is required as a cofactor.

It localises to the cytoplasm. It catalyses the reaction (R)-pantothenate + ATP = (R)-4'-phosphopantothenate + ADP + H(+). It functions in the pathway cofactor biosynthesis; coenzyme A biosynthesis; CoA from (R)-pantothenate: step 1/5. Catalyzes the phosphorylation of pantothenate (Pan), the first step in CoA biosynthesis. The protein is Type III pantothenate kinase of Acidobacterium capsulatum (strain ATCC 51196 / DSM 11244 / BCRC 80197 / JCM 7670 / NBRC 15755 / NCIMB 13165 / 161).